The sequence spans 82 residues: Small ribosomal subunit protein bS18 (82 aa).

It belongs to the bacterial ribosomal protein bS18 family. In terms of assembly, part of the 30S ribosomal subunit. Forms a tight heterodimer with protein bS6.

Its function is as follows. Binds as a heterodimer with protein bS6 to the central domain of the 16S rRNA, where it helps stabilize the platform of the 30S subunit. This chain is Small ribosomal subunit protein bS18, found in Chlamydia pneumoniae (Chlamydophila pneumoniae).